Reading from the N-terminus, the 317-residue chain is Probable cell division protein WhiA (317 aa).

The segment at residues 267–300 (SLKELGEMLHPPVGKSGVNHRLRRLELIARQVRG) is a DNA-binding region (H-T-H motif).

The protein belongs to the WhiA family.

Functionally, involved in cell division and chromosome segregation. This chain is Probable cell division protein WhiA, found in Moorella thermoacetica (strain ATCC 39073 / JCM 9320).